The sequence spans 351 residues: DNA polymerase IV (351 aa).

The 182-residue stretch at 4-185 (IIHVDMDCFF…LPLEKIPGVG (182 aa)) folds into the UmuC domain. Asp8 and Asp103 together coordinate Mg(2+). Glu104 is an active-site residue.

Belongs to the DNA polymerase type-Y family. As to quaternary structure, monomer. Requires Mg(2+) as cofactor.

It localises to the cytoplasm. It catalyses the reaction DNA(n) + a 2'-deoxyribonucleoside 5'-triphosphate = DNA(n+1) + diphosphate. Its function is as follows. Poorly processive, error-prone DNA polymerase involved in untargeted mutagenesis. Copies undamaged DNA at stalled replication forks, which arise in vivo from mismatched or misaligned primer ends. These misaligned primers can be extended by PolIV. Exhibits no 3'-5' exonuclease (proofreading) activity. May be involved in translesional synthesis, in conjunction with the beta clamp from PolIII. This chain is DNA polymerase IV, found in Shigella flexneri.